The primary structure comprises 499 residues: Cysteine--tRNA ligase (499 aa).

Cysteine 29 contacts Zn(2+). The 'HIGH' region motif lies at 31 to 41 (VTVYDLCHLGH). Residues cysteine 213, histidine 238, and glutamate 242 each coordinate Zn(2+). Residues 270–274 (KMSKS) carry the 'KMSKS' region motif. Lysine 273 serves as a coordination point for ATP.

This sequence belongs to the class-I aminoacyl-tRNA synthetase family. As to quaternary structure, monomer. Requires Zn(2+) as cofactor.

The protein resides in the cytoplasm. It carries out the reaction tRNA(Cys) + L-cysteine + ATP = L-cysteinyl-tRNA(Cys) + AMP + diphosphate. The sequence is that of Cysteine--tRNA ligase from Prochlorococcus marinus (strain MIT 9303).